A 486-amino-acid chain; its full sequence is FAD-dependent oxidoreductase domain-containing protein 1 (486 aa).

A helical transmembrane segment spans residues 66–86 (VVVVGGGVLGLSVAYWLKQLE).

Associates with components of the mitochondrial respiratory chain complex I. FAD serves as cofactor.

Its subcellular location is the mitochondrion inner membrane. In terms of biological role, required for the assembly of the mitochondrial membrane respiratory chain NADH dehydrogenase (Complex I). Involved in mid-late stages of complex I assembly. The polypeptide is FAD-dependent oxidoreductase domain-containing protein 1 (FOXRED1) (Macaca fascicularis (Crab-eating macaque)).